We begin with the raw amino-acid sequence, 212 residues long: Protein ERP5 (212 aa).

The N-terminal stretch at 1-20 is a signal peptide; the sequence is MKYNIVHGICLLFAITQAVG. Residues 21–178 lie on the Lumenal side of the membrane; it reads AVHFYAKSGE…FRNQSESANS (158 aa). Residues 31–124 enclose the GOLD domain; that stretch reads TKCFYEHLSR…TLRVFIELEI (94 aa). N171 carries an N-linked (GlcNAc...) asparagine glycan. A helical transmembrane segment spans residues 179–199; the sequence is KIMTWSVFQLLILLGTCAFQL. The Cytoplasmic segment spans residues 200–212; it reads RYLKNFFVKQKVV.

This sequence belongs to the EMP24/GP25L family.

Its subcellular location is the endoplasmic reticulum membrane. Functionally, involved in vesicular protein trafficking. The chain is Protein ERP5 (ERP5) from Saccharomyces cerevisiae (strain ATCC 204508 / S288c) (Baker's yeast).